Reading from the N-terminus, the 253-residue chain is Probable transcriptional regulatory protein Synpcc7942_1017 (253 aa).

This sequence belongs to the TACO1 family.

The protein localises to the cytoplasm. In Synechococcus elongatus (strain ATCC 33912 / PCC 7942 / FACHB-805) (Anacystis nidulans R2), this protein is Probable transcriptional regulatory protein Synpcc7942_1017.